The sequence spans 151 residues: Ribosomal RNA large subunit methyltransferase H (151 aa).

Residues Gly100 and 119 to 124 (LSRMTF) each bind S-adenosyl-L-methionine.

Belongs to the RNA methyltransferase RlmH family. As to quaternary structure, homodimer.

Its subcellular location is the cytoplasm. The enzyme catalyses pseudouridine(1915) in 23S rRNA + S-adenosyl-L-methionine = N(3)-methylpseudouridine(1915) in 23S rRNA + S-adenosyl-L-homocysteine + H(+). Specifically methylates the pseudouridine at position 1915 (m3Psi1915) in 23S rRNA. This chain is Ribosomal RNA large subunit methyltransferase H, found in Thermotoga neapolitana (strain ATCC 49049 / DSM 4359 / NBRC 107923 / NS-E).